The sequence spans 250 residues: 4-hydroxy-tetrahydrodipicolinate reductase (250 aa).

NAD(+) contacts are provided by residues 10–15 (GVKGRI), 78–80 (GTT), and 105–108 (APNF). Residue His-135 is the Proton donor/acceptor of the active site. (S)-2,3,4,5-tetrahydrodipicolinate is bound at residue His-136. Lys-139 (proton donor) is an active-site residue. 145–146 (GT) provides a ligand contact to (S)-2,3,4,5-tetrahydrodipicolinate.

The protein belongs to the DapB family.

It localises to the cytoplasm. It carries out the reaction (S)-2,3,4,5-tetrahydrodipicolinate + NAD(+) + H2O = (2S,4S)-4-hydroxy-2,3,4,5-tetrahydrodipicolinate + NADH + H(+). The catalysed reaction is (S)-2,3,4,5-tetrahydrodipicolinate + NADP(+) + H2O = (2S,4S)-4-hydroxy-2,3,4,5-tetrahydrodipicolinate + NADPH + H(+). It participates in amino-acid biosynthesis; L-lysine biosynthesis via DAP pathway; (S)-tetrahydrodipicolinate from L-aspartate: step 4/4. Functionally, catalyzes the conversion of 4-hydroxy-tetrahydrodipicolinate (HTPA) to tetrahydrodipicolinate. This Streptomyces avermitilis (strain ATCC 31267 / DSM 46492 / JCM 5070 / NBRC 14893 / NCIMB 12804 / NRRL 8165 / MA-4680) protein is 4-hydroxy-tetrahydrodipicolinate reductase.